The chain runs to 155 residues: SsrA-binding protein (155 aa).

This sequence belongs to the SmpB family.

Its subcellular location is the cytoplasm. Functionally, required for rescue of stalled ribosomes mediated by trans-translation. Binds to transfer-messenger RNA (tmRNA), required for stable association of tmRNA with ribosomes. tmRNA and SmpB together mimic tRNA shape, replacing the anticodon stem-loop with SmpB. tmRNA is encoded by the ssrA gene; the 2 termini fold to resemble tRNA(Ala) and it encodes a 'tag peptide', a short internal open reading frame. During trans-translation Ala-aminoacylated tmRNA acts like a tRNA, entering the A-site of stalled ribosomes, displacing the stalled mRNA. The ribosome then switches to translate the ORF on the tmRNA; the nascent peptide is terminated with the 'tag peptide' encoded by the tmRNA and targeted for degradation. The ribosome is freed to recommence translation, which seems to be the essential function of trans-translation. The protein is SsrA-binding protein of Geobacillus sp. (strain WCH70).